The sequence spans 296 residues: MATVQPIVNSHLSELDEDVFHHFGFTTKSFDFKEKFGDVKFVCVCGSSGRIHNFAISMAKLAGLALPVENIAGSHARFVLYKVDHILFADHGMGIPSALIMLHEVTKLLHYAGCKDVLFIRLGTSGGLGVKPGTIVLSDRCVNTKLEPYNELCILGKPVRRQTIVDLNTVNELKKLSENLSLECSVVVGGTIAANDFYEEQGRLDGSICTFSKEEKLAFLQSAYEHGIRNMEMEGTAITSHCYLTGHRAILVCVTAVNRLEGDQITISTDEFTLFAQRPGQLVGEYLKRNNGIIVR.

Residues Gly-46, Arg-77, and 121–124 (RLGT) each bind phosphate. Residues 125–126 (SG) and 201–203 (QGR) each bind uridine.

The protein belongs to the PNP/UDP phosphorylase family. In terms of assembly, homodimer.

The catalysed reaction is uridine + phosphate = alpha-D-ribose 1-phosphate + uracil. It participates in pyrimidine metabolism; UMP biosynthesis via salvage pathway; uracil from uridine (phosphorylase route): step 1/1. In terms of biological role, catalyzes the reversible phosphorylytic cleavage of uridine and deoxyuridine to uracil and ribose- or deoxyribose-1-phosphate. The produced molecules are then utilized as carbon and energy sources or in the rescue of pyrimidine bases for nucleotide synthesis. The sequence is that of Uridine phosphorylase A from Schistosoma mansoni (Blood fluke).